Here is a 596-residue protein sequence, read N- to C-terminus: Beta-fructofuranosidase, insoluble isoenzyme 6 (596 aa).

An N-terminal signal peptide occupies residues 1-25 (MALAGLPLSVFAIAVHFCLVFSSSS). Residues 49–52 (WQND), Q68, and W76 contribute to the substrate site. D52 is an active-site residue. N80 is a glycosylation site (N-linked (GlcNAc...) asparagine). Substrate is bound by residues 113–114 (AS), 177–178 (RD), and E232. N335 is a glycosylation site (N-linked (GlcNAc...) asparagine). A disulfide bond links C436 and C482. N-linked (GlcNAc...) asparagine glycosylation is present at N556.

The protein belongs to the glycosyl hydrolase 32 family. Expressed in roots. Weakly expressed in flowers.

The protein resides in the secreted. The protein localises to the extracellular space. It is found in the apoplast. Its subcellular location is the cell wall. It carries out the reaction Hydrolysis of terminal non-reducing beta-D-fructofuranoside residues in beta-D-fructofuranosides.. This chain is Beta-fructofuranosidase, insoluble isoenzyme 6 (CIN6), found in Oryza sativa subsp. japonica (Rice).